The following is a 490-amino-acid chain: AP-5 complex subunit mu-1 (490 aa).

The MHD domain occupies 206-476 (KPQVSISITE…LISSDYYIWN (271 aa)).

The protein belongs to the adaptor complexes medium subunit family. In terms of assembly, probably part of the adaptor protein complex 5 (AP-5) a tetramer composed of AP5B1, AP5M1, AP5S1 and AP5Z1.

Its subcellular location is the cytoplasm. The protein resides in the cytosol. It is found in the late endosome membrane. The protein localises to the lysosome membrane. Functionally, as part of AP-5, a probable fifth adaptor protein complex it may be involved in endosomal transport. The polypeptide is AP-5 complex subunit mu-1 (AP5M1) (Macaca fascicularis (Crab-eating macaque)).